A 205-amino-acid polypeptide reads, in one-letter code: Ypt/Rab-type GTPase ypt7 (205 aa).

GTP contacts are provided by residues 17-23 (SGVGKTS), 33-40 (FSASYKAT), Gly-66, 125-128 (NKID), and 157-159 (SAK). Positions 37–45 (YKATIGADF) match the Effector region motif. Residues Cys-203 and Cys-205 are each lipidated (S-geranylgeranyl cysteine). Cys-205 is modified (cysteine methyl ester).

It belongs to the small GTPase superfamily. Rab family. In terms of assembly, interacts with the Rab GDP dissociation inhibitor GDI1.

Its subcellular location is the vacuole. Rab activation is generally mediated by a guanine exchange factor (GEF), while inactivation through hydrolysis of bound GTP is catalyzed by a GTPase activating protein (GAP). Functionally, ypt/Rab-type GTPases are key regulators of membrane trafficking and intracellular vesicular transport. They act as molecular switches that convert between GTP-bound and GDP-bound states, and regulate virtually all steps of membrane traffic from the formation of the transport vesicle at the donor membrane to its fusion at the target membrane. In the GDP-bound state, Ypt proteins are predominantly cytosolic, solubilized through the interaction with a GDP dissociation inhibitor (GDI). In the GTP-bound state, the proteins are membrane bound and interact with specific effector proteins that select cargo, promote vesicle movement, or verify the correct site of fusion. Required for fungal morphogenesis, vacuole fusion, autophagy, stress resistance and pathogenicity. This chain is Ypt/Rab-type GTPase ypt7, found in Pyricularia oryzae (strain 70-15 / ATCC MYA-4617 / FGSC 8958) (Rice blast fungus).